Consider the following 452-residue polypeptide: Inner membrane metabolite transport protein YdjE (452 aa).

Residues 1–20 lie on the Cytoplasmic side of the membrane; it reads MEQYDQIGARLDRLPLARFH. A helical transmembrane segment spans residues 21 to 43; sequence YRIFGIISFSLLLTGFLSYSGNV. Over 44-57 the chain is Periplasmic; sequence VLAKLVSNGWSNNF. A helical membrane pass occupies residues 58–80; that stretch reads LNAAFTSALMFGYFIGSLTGGFI. Over 81–91 the chain is Cytoplasmic; sequence GDYFGRRRAFR. A helical membrane pass occupies residues 92–114; sequence INLLIVGIAATGAAFVPDMYWLI. The Periplasmic portion of the chain corresponds to 115–117; the sequence is FFR. The chain crosses the membrane as a helical span at residues 118 to 140; sequence FLMGTGMGALIMVGYASFTEFIP. Residues 141 to 152 lie on the Cytoplasmic side of the membrane; that stretch reads ATVRGKWSARLS. The chain crosses the membrane as a helical span at residues 153-175; the sequence is FVGNWSPMLSAAIGVVVIAFFSW. The Periplasmic segment spans residues 176-178; sequence RIM. Residues 179–198 form a helical membrane-spanning segment; that stretch reads FLLGGIGILLAWFLSGKYFI. The Cytoplasmic portion of the chain corresponds to 199–265; the sequence is ESPRWLAGKG…KGEMLRRTLV (67 aa). A helical transmembrane segment spans residues 266-288; sequence AITVLIAMNISLYTITVWIPTIF. Residues 289–297 lie on the Periplasmic side of the membrane; that stretch reads VNSGIDVDK. Residues 298 to 320 traverse the membrane as a helical segment; it reads SILMTAVIMIGAPVGIFIAALII. Residues 321 to 326 are Cytoplasmic-facing; the sequence is DHFPRR. A helical transmembrane segment spans residues 327–344; that stretch reads LFGSTLLIIIAVLGYIYS. The Periplasmic segment spans residues 345–353; it reads IQTTEWAIL. A helical membrane pass occupies residues 354-376; the sequence is IYGLVMIFFLYMYVCFASAVYIP. The Cytoplasmic segment spans residues 377–388; sequence ELWPTHLRLRGS. Residues 389-411 form a helical membrane-spanning segment; sequence GFVNAVGRIVAVFTPYGVAALLT. Over 412-415 the chain is Periplasmic; sequence HYGS. Residues 416–438 form a helical membrane-spanning segment; sequence ITVFMVLGVMLLLCALVLSIFGI. At 439–452 the chain is on the cytoplasmic side; it reads ETRKVSLEEISEVN.

The protein belongs to the major facilitator superfamily. Sugar transporter (TC 2.A.1.1) family.

The protein resides in the cell inner membrane. In Escherichia coli (strain K12), this protein is Inner membrane metabolite transport protein YdjE (ydjE).